Reading from the N-terminus, the 919-residue chain is Glutamate receptor ionotropic, kainate 3 (919 aa).

The N-terminal stretch at 1–31 (MTAPWRRLRSLVWEYWAGFLVCAFWIPDSRG) is a signal peptide. Over 32–563 (MPHVIRIGGI…VFSFLNPLSP (532 aa)) the chain is Extracellular. 7 N-linked (GlcNAc...) asparagine glycosylation sites follow: Asn70, Asn76, Asn278, Asn381, Asn415, Asn426, and Asn433. Cys99 and Cys350 are disulfide-bonded. Pro518, Thr520, and Arg525 together coordinate L-glutamate. N-linked (GlcNAc...) asparagine glycosylation is found at Asn548 and Asn551. The chain crosses the membrane as a helical span at residues 564–584 (DIWMYVLLAYLGVSCVLFVIA). The Cytoplasmic portion of the chain corresponds to 585-636 (RFSPYEWYDAHPCNPGSEVVENNFTLLNSFWFGMGSLMQQGSELMPKALSTR). The chain crosses the membrane as a helical span at residues 637–657 (IIGGIWWFFTLIIISSYTANL). The Extracellular segment spans residues 658–820 (AAFLTVERME…KEASALGIQK (163 aa)). 3 residues coordinate L-glutamate: Ala691, Thr692, and Glu739. Residue Asn752 is glycosylated (N-linked (GlcNAc...) asparagine). Residues 821–841 (IGGIFIVLAAGLVLSVLVAVG) traverse the membrane as a helical segment. Residues 842-919 (EFIYKLRKTA…CSTSLAPVFP (78 aa)) lie on the Cytoplasmic side of the membrane. Phosphoserine is present on Ser869. Lys887 is covalently cross-linked (Glycyl lysine isopeptide (Lys-Gly) (interchain with G-Cter in SUMO1)).

Belongs to the glutamate-gated ion channel (TC 1.A.10.1) family. GRIK3 subfamily. As to quaternary structure, homotetramer, and heterotetramer with GRIK4 or GRIK5. Can form functional heteromeric receptors with GRIK2. Interacts with PRKCABP. Interacts with NETO2. Homomeric GluR7A forms functional kainate receptors which have very low sensitivity to glutamate. Can form functional heteromeric receptors with GRIK4 and GRIK5. In terms of assembly, homomeric GluR7B forms functional kainate receptors. Mass spectrometry data suggest the protein is N-glycosylated at five distinct sites. In terms of tissue distribution, expressed in the olfactory bulb (at protein level). Expressed in the deep cortical layers, dentate gyrus, reticular thalamic nucleus, mammillary bodies, pons, and cerebellum of the adult.

Its subcellular location is the cell membrane. It is found in the postsynaptic cell membrane. The catalysed reaction is Ca(2+)(in) = Ca(2+)(out). Functionally, ionotropic glutamate receptor that functions as a cation-permeable ligand-gated ion channel, gated by L-glutamate and the glutamatergic agonist kainic acid. Binding of the excitatory neurotransmitter L-glutamate induces a conformation change, leading to the opening of the cation channel, and thereby converts the chemical signal to an electrical impulse. The receptor then desensitizes rapidly and enters a transient inactive state, characterized by the presence of bound agonist. In association with GRIK2, involved in presynaptic facilitation of glutamate release at hippocampal mossy fiber synapses. Ionotropic glutamate receptor that functions as a ligand-gated cation channel, gated by L-glutamate and the glutamatergic agonist kainic acid. This is Glutamate receptor ionotropic, kainate 3 (Grik3) from Rattus norvegicus (Rat).